Reading from the N-terminus, the 398-residue chain is Proteasome-activating nucleotidase (398 aa).

The stretch at 18–59 (IMYLKKRIRQLELQVRTLEADKERLERELSRLRMEMSRLRQP) forms a coiled coil. ATP is bound by residues 183–188 (GCGKTL) and His-322. The segment at 396-398 (MYG) is docks into pockets in the proteasome alpha-ring to cause gate opening.

It belongs to the AAA ATPase family. In terms of assembly, homohexamer. The hexameric complex has a two-ring architecture resembling a top hat that caps the 20S proteasome core at one or both ends. Upon ATP-binding, the C-terminus of PAN interacts with the alpha-rings of the proteasome core by binding to the intersubunit pockets.

The protein localises to the cytoplasm. Its function is as follows. ATPase which is responsible for recognizing, binding, unfolding and translocation of substrate proteins into the archaeal 20S proteasome core particle. Is essential for opening the gate of the 20S proteasome via an interaction with its C-terminus, thereby allowing substrate entry and access to the site of proteolysis. Thus, the C-termini of the proteasomal ATPase function like a 'key in a lock' to induce gate opening and therefore regulate proteolysis. Unfolding activity requires energy from ATP hydrolysis, whereas ATP binding alone promotes ATPase-20S proteasome association which triggers gate opening, and supports translocation of unfolded substrates. The polypeptide is Proteasome-activating nucleotidase (Thermococcus onnurineus (strain NA1)).